Consider the following 301-residue polypeptide: Oxygen-dependent coproporphyrinogen-III oxidase (301 aa).

Ser-90 contributes to the substrate binding site. A divalent metal cation-binding residues include His-94 and His-104. His-104 (proton donor) is an active-site residue. Position 106-108 (106-108 (NVR)) interacts with substrate. His-143 and His-173 together coordinate a divalent metal cation. Positions 238–273 (YVEFNLVWDRGTLFGLQSGGRTESILMSLPPIVKWR) are important for dimerization. 256 to 258 (GGR) contributes to the substrate binding site.

It belongs to the aerobic coproporphyrinogen-III oxidase family. Homodimer. A divalent metal cation serves as cofactor.

Its subcellular location is the cytoplasm. It carries out the reaction coproporphyrinogen III + O2 + 2 H(+) = protoporphyrinogen IX + 2 CO2 + 2 H2O. Its pathway is porphyrin-containing compound metabolism; protoporphyrin-IX biosynthesis; protoporphyrinogen-IX from coproporphyrinogen-III (O2 route): step 1/1. Functionally, involved in the heme biosynthesis. Catalyzes the aerobic oxidative decarboxylation of propionate groups of rings A and B of coproporphyrinogen-III to yield the vinyl groups in protoporphyrinogen-IX. The sequence is that of Oxygen-dependent coproporphyrinogen-III oxidase from Nitrosomonas eutropha (strain DSM 101675 / C91 / Nm57).